The chain runs to 351 residues: Rab9 effector protein with kelch motifs (351 aa).

Kelch repeat units follow at residues 54-102 (KIVI…PESE), 105-156 (SLWV…TNSA), 162-210 (LFVF…VITA), 214-263 (DIYI…TFNK), 264-313 (NIFI…LLPW), and 328-351 (LCFV…TVLT).

Rab9 effector required for endosome to trans-Golgi network (TGN) transport. This is Rab9 effector protein with kelch motifs (rabepk) from Danio rerio (Zebrafish).